Reading from the N-terminus, the 301-residue chain is tRNA dimethylallyltransferase 1 (301 aa).

11 to 18 (GPTGVGKT) lines the ATP pocket. Substrate is bound at residue 13 to 18 (TGVGKT). The interaction with substrate tRNA stretch occupies residues 36-39 (DSRQ).

The protein belongs to the IPP transferase family. Monomer. Requires Mg(2+) as cofactor.

The enzyme catalyses adenosine(37) in tRNA + dimethylallyl diphosphate = N(6)-dimethylallyladenosine(37) in tRNA + diphosphate. In terms of biological role, catalyzes the transfer of a dimethylallyl group onto the adenine at position 37 in tRNAs that read codons beginning with uridine, leading to the formation of N6-(dimethylallyl)adenosine (i(6)A). This chain is tRNA dimethylallyltransferase 1, found in Bacteroides fragilis (strain YCH46).